We begin with the raw amino-acid sequence, 394 residues long: Glycerol-1-phosphate dehydrogenase [NAD(P)+] (394 aa).

NAD(+) contacts are provided by residues Asp54, 116-120, and 138-141; these read GTIHD and TAPS. Asp143 contacts substrate. Residue Ser147 coordinates NAD(+). Asp190 lines the substrate pocket. The Ni(2+) site is built by Asp190 and His270. Substrate is bound at residue His274. Residue His290 participates in Ni(2+) binding.

The protein belongs to the glycerol-1-phosphate dehydrogenase family. Homodimer. It depends on Ni(2+) as a cofactor.

Its subcellular location is the cytoplasm. It carries out the reaction sn-glycerol 1-phosphate + NAD(+) = dihydroxyacetone phosphate + NADH + H(+). The catalysed reaction is sn-glycerol 1-phosphate + NADP(+) = dihydroxyacetone phosphate + NADPH + H(+). Catalyzes the NAD(P)H-dependent reduction of dihydroxyacetonephosphate (DHAP or glycerone phosphate) to glycerol 1-phosphate (G1P). The G1P thus generated is probably used for the synthesis of phosphoglycerolipids in Gram-positive bacterial species. Prefers NADH over NADPH as coenzyme. Is also able to catalyze the reverse reaction, i.e. the NAD(+)-dependent oxidation of G1P but not of G3P. Does not possess glycerol dehydrogenase activity. The polypeptide is Glycerol-1-phosphate dehydrogenase [NAD(P)+] (egsA) (Bacillus subtilis (strain 168)).